The chain runs to 375 residues: Histidine biosynthesis bifunctional protein HisB (375 aa).

The segment at 1 to 168 (MTPIVFIDRD…GIAHTLADAP (168 aa)) is histidinol-phosphatase. Asp8 (nucleophile) is an active-site residue. Mg(2+) is bound by residues Asp8, Asp10, and Asp128. Catalysis depends on Asp10, which acts as the Proton donor. The tract at residues 169–375 (RRAVVQRHTK…HVLPSTKGAL (207 aa)) is imidazoleglycerol-phosphate dehydratase.

In the N-terminal section; belongs to the histidinol-phosphatase family. It in the C-terminal section; belongs to the imidazoleglycerol-phosphate dehydratase family. The cofactor is Mg(2+).

Its subcellular location is the cytoplasm. The enzyme catalyses D-erythro-1-(imidazol-4-yl)glycerol 3-phosphate = 3-(imidazol-4-yl)-2-oxopropyl phosphate + H2O. The catalysed reaction is L-histidinol phosphate + H2O = L-histidinol + phosphate. It participates in amino-acid biosynthesis; L-histidine biosynthesis; L-histidine from 5-phospho-alpha-D-ribose 1-diphosphate: step 6/9. The protein operates within amino-acid biosynthesis; L-histidine biosynthesis; L-histidine from 5-phospho-alpha-D-ribose 1-diphosphate: step 8/9. The polypeptide is Histidine biosynthesis bifunctional protein HisB (Xylella fastidiosa (strain 9a5c)).